The following is a 388-amino-acid chain: Muscleblind-like protein 1 (388 aa).

The residue at position 6 (T6) is a Phosphothreonine. 4 consecutive C3H1-type zinc fingers follow at residues 13–41 (WLTL…HPSK), 47–73 (NGRV…HPPP), 179–207 (TDRL…HPAD), and 215–241 (DNTV…HPPA).

This sequence belongs to the muscleblind family. Interacts with DDX1 and YBX1. Interacts with HNRNPH1; the interaction in RNA-independent. Interacts with RBPMS; the interaction allows cooperative assembly of RNA-bound stable cell-specific alternative splicing regulatory complexes. As to expression, highly expressed in cardiac, skeletal muscle and during myoblast differentiation. Weakly expressed in other tissues (at protein level). Expressed in heart, brain, placenta, lung, liver, skeletal muscle, kidney and pancreas.

It localises to the nucleus. It is found in the cytoplasm. The protein localises to the cytoplasmic granule. In terms of biological role, mediates pre-mRNA alternative splicing regulation. Acts either as activator or repressor of splicing on specific pre-mRNA targets. Inhibits cardiac troponin-T (TNNT2) pre-mRNA exon inclusion but induces insulin receptor (IR) pre-mRNA exon inclusion in muscle. Antagonizes the alternative splicing activity pattern of CELF proteins. Regulates the TNNT2 exon 5 skipping through competition with U2AF2. Inhibits the formation of the spliceosome A complex on intron 4 of TNNT2 pre-mRNA. Binds to the stem-loop structure within the polypyrimidine tract of TNNT2 intron 4 during spliceosome assembly. Binds to the 5'-YGCU(U/G)Y-3'consensus sequence. Binds to the IR RNA. Binds to expanded CUG repeat RNA, which folds into a hairpin structure containing GC base pairs and bulged, unpaired U residues. Together with RNA binding proteins RBPMS and RBFOX2, activates vascular smooth muscle cells alternative splicing events. Regulates NCOR2 alternative splicing. This chain is Muscleblind-like protein 1 (MBNL1), found in Homo sapiens (Human).